The sequence spans 149 residues: MERTFLAIKPDGVQRGLVGEIIRRFETKGFTLVGLKFLQVSKELAEQHYGVHRERPFFPSLVEFITSGPVVAMVWEGDGVIASARKIIGATNPLTAEPGTIRGDFGINIGRNLIHGSDAPETAQKEVSLWFTDAELVNWQPHLTPWLHE.

ATP contacts are provided by Lys9, Phe57, Arg85, Thr91, Arg102, and Asn112. The Pros-phosphohistidine intermediate role is filled by His115.

This sequence belongs to the NDK family. As to quaternary structure, homotetramer. It depends on Mg(2+) as a cofactor.

It localises to the cytoplasm. The catalysed reaction is a 2'-deoxyribonucleoside 5'-diphosphate + ATP = a 2'-deoxyribonucleoside 5'-triphosphate + ADP. The enzyme catalyses a ribonucleoside 5'-diphosphate + ATP = a ribonucleoside 5'-triphosphate + ADP. Functionally, major role in the synthesis of nucleoside triphosphates other than ATP. The ATP gamma phosphate is transferred to the NDP beta phosphate via a ping-pong mechanism, using a phosphorylated active-site intermediate. This chain is Nucleoside diphosphate kinase, found in Nostoc sp. (strain PCC 7120 / SAG 25.82 / UTEX 2576).